The sequence spans 339 residues: F-box protein At3g22700 (339 aa).

In terms of domain architecture, F-box spans 1–49; that stretch reads MMSNLPLDLVEEILSRVPATSLKRLRSTCRQWNALLKDRRFTEKHFRKA.

The chain is F-box protein At3g22700 from Arabidopsis thaliana (Mouse-ear cress).